Reading from the N-terminus, the 625-residue chain is Probable potassium transport system protein Kup (625 aa).

12 helical membrane-spanning segments follow: residues 13-33 (TALAALGVVFGDIGTSPLYAL), 53-73 (ILSIIFWCLMLIISIKYVAIV), 103-123 (IYMIAIGFIGASLFFGDGIIT), 141-161 (VFDPFIMPIAIAIIVTLFLVQ), 172-192 (FGPITLVWFLSLGILGIHSVI), 206-226 (AIQFIYHHPIMTFFVMGAVVL), 250-270 (WFFVVLPCLVLNYAGQGALLL), 282-302 (LLVPQWALYPMIIMATMATVI), 340-360 (IYVPFLNWLLLIAIIILILIF), 369-389 (AYGLAVTLTMLCDTILVAVFI), 400-420 (VLLLIIPFFILESVLVGATSL), and 422-442 (ILSGGWVPLLIGAIAVTILMT).

Belongs to the HAK/KUP transporter (TC 2.A.72) family.

The protein resides in the cell inner membrane. The catalysed reaction is K(+)(in) + H(+)(in) = K(+)(out) + H(+)(out). In terms of biological role, transport of potassium into the cell. Likely operates as a K(+):H(+) symporter. This is Probable potassium transport system protein Kup from Acinetobacter baumannii (strain ACICU).